Consider the following 206-residue polypeptide: Large ribosomal subunit protein uL4 (206 aa).

A disordered region spans residues 65-85; the sequence is KQKGSGGARHGDRKAPQFRGG.

This sequence belongs to the universal ribosomal protein uL4 family. Part of the 50S ribosomal subunit.

Its function is as follows. One of the primary rRNA binding proteins, this protein initially binds near the 5'-end of the 23S rRNA. It is important during the early stages of 50S assembly. It makes multiple contacts with different domains of the 23S rRNA in the assembled 50S subunit and ribosome. Forms part of the polypeptide exit tunnel. This Parvibaculum lavamentivorans (strain DS-1 / DSM 13023 / NCIMB 13966) protein is Large ribosomal subunit protein uL4.